The chain runs to 266 residues: Trypsin Blo t 3 (266 aa).

Positions 1 to 15 (MKVLVLFCLVSLAAA) are cleaved as a signal peptide. Residues 16–35 (GPLKDALNKAQVDAFYAEGY) constitute a propeptide that is removed on maturation. The Peptidase S1 domain occupies 36–260 (IVDGSNAADG…RVGNYISWIK (225 aa)). Cys-60 and Cys-76 are oxidised to a cystine. Active-site charge relay system residues include His-75 and Asp-120. Disulfide bonds link Cys-187–Cys-204 and Cys-216–Cys-240. Ser-220 functions as the Charge relay system in the catalytic mechanism.

This sequence belongs to the peptidase S1 family.

It is found in the secreted. The enzyme catalyses Preferential cleavage: Arg-|-Xaa, Lys-|-Xaa.. The sequence is that of Trypsin Blo t 3 from Blomia tropicalis (Mite).